An 88-amino-acid chain; its full sequence is Putative septation protein SpoVG (88 aa).

This sequence belongs to the SpoVG family.

Its function is as follows. Could be involved in septation. The protein is Putative septation protein SpoVG of Caldicellulosiruptor bescii (strain ATCC BAA-1888 / DSM 6725 / KCTC 15123 / Z-1320) (Anaerocellum thermophilum).